The sequence spans 341 residues: Anthranilate phosphoribosyltransferase (341 aa).

5-phospho-alpha-D-ribose 1-diphosphate is bound by residues G79, G82 to D83, T87, N89 to T92, K107 to S115, and S119. G79 is a binding site for anthranilate. S91 lines the Mg(2+) pocket. N110 contacts anthranilate. An anthranilate-binding site is contributed by R165. Mg(2+) contacts are provided by D224 and E225.

This sequence belongs to the anthranilate phosphoribosyltransferase family. In terms of assembly, homodimer. Requires Mg(2+) as cofactor.

It carries out the reaction N-(5-phospho-beta-D-ribosyl)anthranilate + diphosphate = 5-phospho-alpha-D-ribose 1-diphosphate + anthranilate. The protein operates within amino-acid biosynthesis; L-tryptophan biosynthesis; L-tryptophan from chorismate: step 2/5. Catalyzes the transfer of the phosphoribosyl group of 5-phosphorylribose-1-pyrophosphate (PRPP) to anthranilate to yield N-(5'-phosphoribosyl)-anthranilate (PRA). The chain is Anthranilate phosphoribosyltransferase from Bacillus cereus (strain G9842).